The chain runs to 136 residues: Large ribosomal subunit protein uL16c (136 aa).

The protein belongs to the universal ribosomal protein uL16 family. In terms of assembly, part of the 50S ribosomal subunit.

It is found in the plastid. The protein localises to the chloroplast. The protein is Large ribosomal subunit protein uL16c of Chloranthus spicatus (Chulantree).